Consider the following 271-residue polypeptide: Glutamate racemase (271 aa).

Substrate is bound by residues 10 to 11 (DS) and 42 to 43 (YG). C73 (proton donor/acceptor) is an active-site residue. 74-75 (NT) serves as a coordination point for substrate. C183 acts as the Proton donor/acceptor in catalysis. A substrate-binding site is contributed by 184-185 (TH).

This sequence belongs to the aspartate/glutamate racemases family.

The catalysed reaction is L-glutamate = D-glutamate. It participates in cell wall biogenesis; peptidoglycan biosynthesis. Functionally, provides the (R)-glutamate required for cell wall biosynthesis. The polypeptide is Glutamate racemase (Streptococcus thermophilus (strain CNRZ 1066)).